Consider the following 287-residue polypeptide: U1 small nuclear ribonucleoprotein A (287 aa).

One can recognise an RRM 1 domain in the interval H16 to T95. At K66 the chain carries N6-acetyllysine. The segment at T106–G134 is disordered. Positions P125–G134 are enriched in low complexity. R157 is subject to Omega-N-methylarginine. In terms of domain architecture, RRM 2 spans H213–K287.

The protein belongs to the RRM U1 A/B'' family. As to quaternary structure, U1 snRNP is composed of the 7 core Sm proteins SNRPB, SNRPD1, SNRPD2, SNRPD3, SNRPE, SNRPF and SNRPG that assemble in a heptameric protein ring on the Sm site of the small nuclear RNA to form the core snRNP, and at least three U1 snRNP-specific proteins SNRNP70/U1-70K, SNRPA/U1-A and SNRPC/U1-C. Interacts with SFPQ; component of a snRNP-free complex with SFPQ. Interacts with IVNS1ABP (via BACK domain); the interaction is indirect.

It localises to the nucleus. Functionally, component of the spliceosomal U1 snRNP, which is essential for recognition of the pre-mRNA 5' splice-site and the subsequent assembly of the spliceosome. U1 snRNP is the first snRNP to interact with pre-mRNA. This interaction is required for the subsequent binding of U2 snRNP and the U4/U6/U5 tri-snRNP. SNRPA binds stem loop II of U1 snRNA. In a snRNP-free form (SF-A) may be involved in coupled pre-mRNA splicing and polyadenylation process. May bind preferentially to the 5'-UGCAC-3' motif on RNAs. This chain is U1 small nuclear ribonucleoprotein A (Snrpa), found in Mus musculus (Mouse).